The chain runs to 174 residues: Peptide deformylase (174 aa).

The Fe cation site is built by C91 and H133. E134 is an active-site residue. H137 provides a ligand contact to Fe cation.

This sequence belongs to the polypeptide deformylase family. The cofactor is Fe(2+).

It catalyses the reaction N-terminal N-formyl-L-methionyl-[peptide] + H2O = N-terminal L-methionyl-[peptide] + formate. Removes the formyl group from the N-terminal Met of newly synthesized proteins. Requires at least a dipeptide for an efficient rate of reaction. N-terminal L-methionine is a prerequisite for activity but the enzyme has broad specificity at other positions. The sequence is that of Peptide deformylase from Fusobacterium nucleatum subsp. nucleatum (strain ATCC 25586 / DSM 15643 / BCRC 10681 / CIP 101130 / JCM 8532 / KCTC 2640 / LMG 13131 / VPI 4355).